We begin with the raw amino-acid sequence, 1074 residues long: Phospholipase D1 (1074 aa).

The PX domain maps to 81–212; that stretch reads IKAQVLEVER…TEFLDVSQLS (132 aa). A PH domain is found at 219 to 328; the sequence is PKGLEGMIMK…WGGAIEEFIR (110 aa). 2 S-palmitoyl cysteine lipidation sites follow: C240 and C241. Positions 459–486 constitute a PLD phosphodiesterase 1 domain; the sequence is YLWAHHEKLVIIDQSVAFVGGIDLAYGR. Residues 463–928 are catalytic; that stretch reads HHEKLVIIDQ…MLGKRDSEMA (466 aa). A phosphoserine mark is found at S499, S561, and S629. The PLD phosphodiesterase 2 domain occupies 891-918; that stretch reads ELIYVHSKLLIADDNTVIIGSANINDRS.

The protein belongs to the phospholipase D family. As to quaternary structure, interacts with PIP5K1B. Expressed in kidney, lung, and at a much lower levels, in brain, liver, heart, testis and spleen.

The protein localises to the cytoplasm. It is found in the perinuclear region. It localises to the endoplasmic reticulum membrane. Its subcellular location is the golgi apparatus membrane. The protein resides in the late endosome membrane. The enzyme catalyses a 1,2-diacyl-sn-glycero-3-phosphocholine + H2O = a 1,2-diacyl-sn-glycero-3-phosphate + choline + H(+). It catalyses the reaction ethanol + a 1,2-diacyl-sn-glycero-3-phosphocholine = 1,2-diacyl-sn-glycero-3-phosphoethanol + choline. The catalysed reaction is 1,2-dihexadecanoyl-sn-glycero-3-phosphocholine + H2O = 1,2-dihexadecanoyl-sn-glycero-3-phosphate + choline + H(+). With respect to regulation, stimulated by phosphatidylinositol 4,5-bisphosphate and phosphatidylinositol 3,4,5-trisphosphate, activated by the phosphokinase C-alpha, by the ADP-ribosylation factor-1 (ARF-1), and to a lesser extent by GTP-binding proteins: RHO A, RAC-1 and CDC42. Inhibited by oleate. Function as phospholipase selectivefor phosphatidylcholine. Implicated as a critical step in numerous cellular pathways, including signal transduction, membrane trafficking, and the regulation of mitosis. May be involved in the regulation of perinuclear intravesicular membrane traffic. The chain is Phospholipase D1 from Mus musculus (Mouse).